The following is a 1440-amino-acid chain: Protein lin-15B (1440 aa).

Disordered regions lie at residues 1–22 (MQTL…SSSS), 48–67 (ILRH…HLDA), 618–660 (PKEE…GRPI), and 738–769 (KDEP…PSSY). Residues 10 to 22 (TSNPASIPTSSSS) are compositionally biased toward low complexity. The segment covering 631–646 (STSSPATSSPTIIRPR) has biased composition (low complexity). The span at 757–767 (NRTTASSQGPS) shows a compositional bias: polar residues. The THAP-type zinc-finger motif lies at 1135–1209 (NPGVCCFCSK…LLKGMIPDAA (75 aa)). Disordered regions lie at residues 1239-1281 (AIDL…EPSQ), 1298-1350 (RELS…GTSQ), and 1395-1440 (FADE…PSNE). A compositionally biased stretch (acidic residues) spans 1254–1264 (TQEEEEEEEYE). A DNA-binding region (a.T hook 1) is located at residues 1317–1329 (PNPRGRPRKYPKN). The segment covering 1396 to 1407 (ADEEEEEEEYEE) has biased composition (acidic residues). A DNA-binding region (a.T hook 2) is located at residues 1418-1430 (GRPVGRPRKDANK).

Functionally, synthetic multivulva (synMuv) class B protein. SynMuv proteins are required to repress the induction of vulval development. Acts redundantly with SynMuv class A protein lin-15A to negatively regulate vulval development. Regulates let-23 basal activity. In Caenorhabditis elegans, this protein is Protein lin-15B.